A 431-amino-acid polypeptide reads, in one-letter code: Histidinol dehydrogenase (431 aa).

Residues Tyr124, Gln187, and Asn210 each contribute to the NAD(+) site. Substrate contacts are provided by Ser236, Gln258, and His261. Zn(2+) is bound by residues Gln258 and His261. Active-site proton acceptor residues include Glu325 and His326. Residues His326, Asp359, Glu413, and His418 each coordinate substrate. Asp359 contributes to the Zn(2+) binding site. A Zn(2+)-binding site is contributed by His418.

Belongs to the histidinol dehydrogenase family. The cofactor is Zn(2+).

The catalysed reaction is L-histidinol + 2 NAD(+) + H2O = L-histidine + 2 NADH + 3 H(+). It participates in amino-acid biosynthesis; L-histidine biosynthesis; L-histidine from 5-phospho-alpha-D-ribose 1-diphosphate: step 9/9. In terms of biological role, catalyzes the sequential NAD-dependent oxidations of L-histidinol to L-histidinaldehyde and then to L-histidine. This is Histidinol dehydrogenase from Legionella pneumophila (strain Lens).